A 576-amino-acid chain; its full sequence is Sulfite reductase [NADPH] hemoprotein beta-component (576 aa).

A compositionally biased stretch (basic and acidic residues) spans 1 to 12; sequence MDAKTQPDRSRD. The disordered stretch occupies residues 1–26; the sequence is MDAKTQPDRSRDVSQPLDKLGPDETL. Positions 441, 447, 486, and 490 each coordinate [4Fe-4S] cluster. A siroheme-binding site is contributed by C490.

Belongs to the nitrite and sulfite reductase 4Fe-4S domain family. Alpha(8)-beta(8). The alpha component is a flavoprotein, the beta component is a hemoprotein. The cofactor is siroheme. It depends on [4Fe-4S] cluster as a cofactor.

The enzyme catalyses hydrogen sulfide + 3 NADP(+) + 3 H2O = sulfite + 3 NADPH + 4 H(+). It functions in the pathway sulfur metabolism; hydrogen sulfide biosynthesis; hydrogen sulfide from sulfite (NADPH route): step 1/1. In terms of biological role, component of the sulfite reductase complex that catalyzes the 6-electron reduction of sulfite to sulfide. This is one of several activities required for the biosynthesis of L-cysteine from sulfate. The chain is Sulfite reductase [NADPH] hemoprotein beta-component from Nitrobacter winogradskyi (strain ATCC 25391 / DSM 10237 / CIP 104748 / NCIMB 11846 / Nb-255).